We begin with the raw amino-acid sequence, 1098 residues long: Probable DNA-directed RNA polymerase (1098 aa).

Over residues 1–24 (PIRESVRVSTDRDPDLEDEKREQL) the composition is skewed to basic and acidic residues. The segment at 1-26 (PIRESVRVSTDRDPDLEDEKREQLGE) is disordered. Catalysis depends on residues Asp663, Lys750, and Asp915.

It belongs to the phage and mitochondrial RNA polymerase family.

It localises to the mitochondrion. It catalyses the reaction RNA(n) + a ribonucleoside 5'-triphosphate = RNA(n+1) + diphosphate. Its function is as follows. DNA-dependent RNA polymerase catalyzes the transcription of DNA into RNA using the four ribonucleoside triphosphates as substrates. The protein is Probable DNA-directed RNA polymerase of Zea mays (Maize).